A 216-amino-acid polypeptide reads, in one-letter code: Ras-related protein RABE1c (216 aa).

22-29 (GDSGVGKS) contributes to the GTP binding site. The Effector region signature appears at 44 to 52 (FITTIGIDF). GTP-binding positions include 70 to 74 (DTAGQ), 128 to 131 (NKAD), and 159 to 160 (SA). Residues C213 and C214 are each lipidated (S-geranylgeranyl cysteine).

This sequence belongs to the small GTPase superfamily. Rab family. Interacts with PI5K2.

It localises to the golgi apparatus membrane. It is found in the cell membrane. Its function is as follows. Involved in membrane trafficking from the Golgi to the plasma membrane. This chain is Ras-related protein RABE1c (RABE1C), found in Arabidopsis thaliana (Mouse-ear cress).